A 550-amino-acid polypeptide reads, in one-letter code: Amino acid transporter AVT1D (550 aa).

The span at 1–16 (MKLDEEFLHDRDHSFL) shows a compositional bias: basic and acidic residues. Residues 1-99 (MKLDEEFLHD…FMPQSSSRRL (99 aa)) are disordered. A compositionally biased stretch (polar residues) spans 84–99 (TPPSVSFMPQSSSRRL). The next 11 membrane-spanning stretches (helical) occupy residues 164–184 (SVLNGTNVLCGLGLITMPYAI), 189–209 (WLGLPILLFFGVITCYTGVLM), 236–256 (FIISILLYVELYAACVEYIIM), 264–286 (LFPNVSLSIASGISLDSPQIFAI), 308–328 (SVGGVLASILLGICLFWVGAV), 345–365 (LPVTIGIFGFGYSGHSVFPNI), 375–395 (FPLVLVICFSFCTVLYIAVAV), 424–444 (VWTAVITPMTKYALTITPIVM), 459–479 (GVSILFRTMLVTSTLVVALSV), 481–501 (FFAIVAALIGSFLAMLVALIF), and 521–541 (LCIFIIVFGVVSGCCGTYSAI).

Belongs to the amino acid/polyamine transporter 2 family. Amino acid/auxin permease (AAAP) (TC 2.A.18.5) subfamily.

It is found in the membrane. This chain is Amino acid transporter AVT1D, found in Arabidopsis thaliana (Mouse-ear cress).